The sequence spans 172 residues: uncharacterized protein (172 aa).

Residues 147 to 159 (AGSGSGSGSGSGS) show a composition bias toward gly residues. Residues 147–172 (AGSGSGSGSGSGSDTGPFKKSQYKIL) are disordered.

This is an uncharacterized protein from Homo sapiens (Human).